Reading from the N-terminus, the 116-residue chain is Insulin (116 aa).

The signal sequence occupies residues 1–24; that stretch reads MAALWLQSFSLLVLLVVSWPGSQA. Disulfide bonds link Cys32–Cys102, Cys44–Cys115, and Cys101–Cys106. The propeptide at 56–93 is c peptide; it reads DVDQLLGFLPPKSGGAAAAGADNEVAEFAFKDQMEMMV.

The protein belongs to the insulin family. In terms of assembly, heterodimer of a B chain and an A chain linked by two disulfide bonds.

The protein localises to the secreted. In terms of biological role, insulin decreases blood glucose concentration. It increases cell permeability to monosaccharides, amino acids and fatty acids. It accelerates glycolysis, the pentose phosphate cycle, and glycogen synthesis in liver. The sequence is that of Insulin (ins) from Lophius americanus (American angler).